The following is a 42-amino-acid chain: Daisho1 (42 aa).

The first 20 residues, 1-20 (MKFFQAAALLLAMFAALANA), serve as a signal peptide directing secretion. A propeptide spans 21-26 (EPVPQP) (removed by a dipeptidylpeptidase). Threonine amide is present on Thr-41.

Hemolymph (at protein level).

The protein resides in the secreted. Its function is as follows. Peptide which plays a role in the humoral immune response to a subset of filamentous fungi, including F.oxysporum and F.verticillioides. The chain is Daisho1 from Drosophila melanogaster (Fruit fly).